Here is a 132-residue protein sequence, read N- to C-terminus: MATRHQVRQSVISLLYAFELNSQNNVFVDEILDEKKIRNEQKNFTLNLYHGILDNLNNIDETLNSFLNDNQITALGHVERAILRLGAYELLFTDTPSAIVINEAIELAKELANDNSPKFINGVLDALIKAKK.

Belongs to the NusB family.

Its function is as follows. Involved in transcription antitermination. Required for transcription of ribosomal RNA (rRNA) genes. Binds specifically to the boxA antiterminator sequence of the ribosomal RNA (rrn) operons. The protein is Transcription antitermination protein NusB of Campylobacter jejuni subsp. jejuni serotype O:6 (strain 81116 / NCTC 11828).